Consider the following 334-residue polypeptide: Short-chain dehydrogenase/reductase (334 aa).

Residues L44, K68, D93, N120, and K152 each coordinate NADP(+). Residues S176 and Y205 each act as proton donor in the active site. The NADP(+) site is built by Y205, K209, and N239. K209 (lowers pKa of active site Tyr) is an active-site residue.

Belongs to the short-chain dehydrogenases/reductases (SDR) family.

It participates in mycotoxin biosynthesis. Its function is as follows. Short-chain dehydrogenase/reductase; part of the 2 gene clusters that mediate the biosynthesis of fusicoccins, diterpene glucosides that display phytohormone-like activity and function as potent activators of plasma membrane H(+)-ATPases in plants by modifying 14-3-3 proteins and cause the plant disease constriction canker. The first step in the pathway is performed by the fusicoccadiene synthase PaFS that possesses both prenyl transferase and terpene cyclase activity, converting isopentenyl diphosphate and dimethylallyl diphosphate into geranylgeranyl diphosphate (GGDP) and successively converting GGDP into fusicocca-2,10(14)-diene, a precursor for fusicoccin H. The second step is the oxidation at the C-8 position by the cytochrome P450 monooxygenase PaP450-2 to yield fusicocca-2,10(14)-diene-8-beta-ol. The cytochrome P450 monooxygenase PaP450-1 then catalyzes the hydroxylation at the C-16 position to produce fusicocca-2,10(14)-diene-8-beta,16-diol. The dioxygenase fc-dox then catalyzes the 16-oxydation of fusicocca-2,10(14)-diene-8-beta,16-diol to yield an aldehyde (8-beta-hydroxyfusicocca-1,10(14)-dien-16-al). The short-chain dehydrogenase/reductase fc-sdr catalyzes the reduction of the aldehyde to yield fusicocca-1,10(14)-diene-8-beta,16-diol. The next step is the hydroxylation at C-9 performed by the cytochrome P450 monooxygenase PaP450-3 that leads to fusicoccin H aglycon which is glycosylated to fusicoccin H by the O-glycosyltransferase PaGT. Hydroxylation at C-12 by the cytochrome P450 monooxygenase PaP450-4 leads then to the production of fusicoccin Q and is followed by methylation by the O-methyltransferase PaMT to yield fusicoccin P. Fusicoccin P is further converted to fusicoccin J via prenylation by the O-glucose prenyltransferase PaPT. Cytochrome P450 monooxygenase PaP450-5 then performs hydroxylation at C-19 to yield dideacetyl-fusicoccin A which is acetylated to 3'-O-deacetyl-fusicoccin A by the O-acetyltransferase PaAT-2. Finally, a another acetylation by the O-acetyltransferase PaAT-1 yields fusicoccin A. The sequence is that of Short-chain dehydrogenase/reductase from Phomopsis amygdali (Fusicoccum amygdali).